A 761-amino-acid polypeptide reads, in one-letter code: RNA-binding protein mde7 (761 aa).

3 stretches are compositionally biased toward polar residues: residues 31-46, 58-83, and 99-110; these read PNHS…NSLL, SRNS…TTPF, and SRNNSYLQGTAE. 2 disordered regions span residues 31-110 and 188-213; these read PNHS…GTAE and HYFD…EASN. Over residues 188 to 197 the composition is skewed to basic and acidic residues; it reads HYFDDTDKSV. The segment covering 199 to 211 has biased composition (low complexity); that stretch reads SKSSSGSNSLSEA. One can recognise an RRM 1 domain in the interval 223-289; the sequence is IVGGLPDDFD…SSTNNFTIIQ (67 aa). Residues 442–466 show a composition bias toward polar residues; sequence ESNSLSNQPNNFAQTSFDYQPNHPN. Residues 442 to 468 are disordered; sequence ESNSLSNQPNNFAQTSFDYQPNHPNAI. Positions 602–679 constitute an RRM 2 domain; sequence NTIYVGNLSN…GGIRLSYSKN (78 aa).

The protein is RNA-binding protein mde7 (mde7) of Schizosaccharomyces pombe (strain 972 / ATCC 24843) (Fission yeast).